We begin with the raw amino-acid sequence, 894 residues long: Bifunctional glutamine synthetase adenylyltransferase/adenylyl-removing enzyme (894 aa).

The adenylyl removase stretch occupies residues 1 to 410; it reads MPANTSAAIA…HFEQVFILPS (410 aa). The tract at residues 415–894 is adenylyl transferase; that stretch reads SHPLSELWLD…QVFEQALDFS (480 aa).

This sequence belongs to the GlnE family. Mg(2+) serves as cofactor.

The catalysed reaction is [glutamine synthetase]-O(4)-(5'-adenylyl)-L-tyrosine + phosphate = [glutamine synthetase]-L-tyrosine + ADP. It carries out the reaction [glutamine synthetase]-L-tyrosine + ATP = [glutamine synthetase]-O(4)-(5'-adenylyl)-L-tyrosine + diphosphate. Involved in the regulation of glutamine synthetase GlnA, a key enzyme in the process to assimilate ammonia. When cellular nitrogen levels are high, the C-terminal adenylyl transferase (AT) inactivates GlnA by covalent transfer of an adenylyl group from ATP to specific tyrosine residue of GlnA, thus reducing its activity. Conversely, when nitrogen levels are low, the N-terminal adenylyl removase (AR) activates GlnA by removing the adenylyl group by phosphorolysis, increasing its activity. The regulatory region of GlnE binds the signal transduction protein PII (GlnB) which indicates the nitrogen status of the cell. The sequence is that of Bifunctional glutamine synthetase adenylyltransferase/adenylyl-removing enzyme from Chromobacterium violaceum (strain ATCC 12472 / DSM 30191 / JCM 1249 / CCUG 213 / NBRC 12614 / NCIMB 9131 / NCTC 9757 / MK).